The primary structure comprises 90 residues: Cell division protein CrgA (90 aa).

Positions Met-1–Val-25 are disordered. The segment covering Asn-9–Arg-22 has biased composition (polar residues). Transmembrane regions (helical) follow at residues Val-38–Gly-58 and Leu-67–Met-87.

This sequence belongs to the CrgA family.

It is found in the cell membrane. In terms of biological role, involved in cell division. The polypeptide is Cell division protein CrgA (Corynebacterium glutamicum (strain R)).